Reading from the N-terminus, the 1193-residue chain is DNA-directed RNA polymerase subunit beta (1193 aa).

Positions Ile-1152–Glu-1161 are enriched in acidic residues. The segment at Ile-1152–Glu-1193 is disordered. The span at Asp-1184–Glu-1193 shows a compositional bias: basic and acidic residues.

The protein belongs to the RNA polymerase beta chain family. In terms of assembly, the RNAP catalytic core consists of 2 alpha, 1 beta, 1 beta' and 1 omega subunit. When a sigma factor is associated with the core the holoenzyme is formed, which can initiate transcription.

The catalysed reaction is RNA(n) + a ribonucleoside 5'-triphosphate = RNA(n+1) + diphosphate. Functionally, DNA-dependent RNA polymerase catalyzes the transcription of DNA into RNA using the four ribonucleoside triphosphates as substrates. In Bacillus pumilus (strain SAFR-032), this protein is DNA-directed RNA polymerase subunit beta.